The sequence spans 192 residues: Fe/S biogenesis protein NfuA (192 aa).

2 residues coordinate [4Fe-4S] cluster: C150 and C153.

The protein belongs to the NfuA family. In terms of assembly, homodimer. [4Fe-4S] cluster is required as a cofactor.

Its function is as follows. Involved in iron-sulfur cluster biogenesis. Binds a 4Fe-4S cluster, can transfer this cluster to apoproteins, and thereby intervenes in the maturation of Fe/S proteins. Could also act as a scaffold/chaperone for damaged Fe/S proteins. In Ruthia magnifica subsp. Calyptogena magnifica, this protein is Fe/S biogenesis protein NfuA.